Reading from the N-terminus, the 336-residue chain is CST complex subunit STN1 (336 aa).

The OB DNA-binding region spans 49 to 126; sequence VDILGTVVCV…EVVASIFYKV (78 aa). Winged helix-turn-helix (wHTH) stretches follow at residues 162–263 and 264–336; these read QSQE…YVTD and HDKE…YTAF.

This sequence belongs to the CTC1 family. As to quaternary structure, component of the CST complex.

The protein localises to the nucleus. Its subcellular location is the chromosome. It is found in the telomere. Functionally, component of the CST complex proposed to act as a specialized replication factor promoting DNA replication under conditions of replication stress or natural replication barriers such as the telomere duplex. The CST complex binds single-stranded DNA with high affinity in a sequence-independent manner, while isolated subunits bind DNA with low affinity by themselves. Initially the CST complex has been proposed to protect telomeres from DNA degradation. However, the CST complex has been shown to be involved in several aspects of telomere replication. This Aquarana catesbeiana (American bullfrog) protein is CST complex subunit STN1.